Consider the following 504-residue polypeptide: Putative arrestin-related trafficking adapter SPBC839.02 (504 aa).

A disordered region spans residues Q481–N504.

Belongs to the ALY1 family.

In terms of biological role, may regulate endocytosis in response to extracellular stimuli. This chain is Putative arrestin-related trafficking adapter SPBC839.02, found in Schizosaccharomyces pombe (strain 972 / ATCC 24843) (Fission yeast).